Reading from the N-terminus, the 118-residue chain is Cytochrome b-c1 complex subunit 7 (118 aa).

Residues 1-32 form an igE-binding. Immunodominant epitope; induces specific IgE antibody production in mice. Causes degranulation of rat basophilic leukemia (RBL) cells and the release of beta-hexosaminidase from them region; the sequence is MVHLTKTLRFINNPGFRKFYYGLQGYNKYGLY.

This sequence belongs to the UQCRB/QCR7 family. Component of the ubiquinol-cytochrome c oxidoreductase (cytochrome b-c1 complex, complex III, CIII), a multisubunit enzyme composed of 3 respiratory subunits cytochrome b, cytochrome c1 and Rieske protein, 2 core protein subunits, and additional low-molecular weight protein subunits. The complex exists as an obligatory dimer and forms supercomplexes (SCs) in the inner mitochondrial membrane with cytochrome c oxidase (complex IV, CIV).

It is found in the mitochondrion inner membrane. Component of the ubiquinol-cytochrome c oxidoreductase, a multisubunit transmembrane complex that is part of the mitochondrial electron transport chain which drives oxidative phosphorylation. The respiratory chain contains 3 multisubunit complexes succinate dehydrogenase (complex II, CII), ubiquinol-cytochrome c oxidoreductase (cytochrome b-c1 complex, complex III, CIII) and cytochrome c oxidase (complex IV, CIV), that cooperate to transfer electrons derived from NADH and succinate to molecular oxygen, creating an electrochemical gradient over the inner membrane that drives transmembrane transport and the ATP synthase. The cytochrome b-c1 complex catalyzes electron transfer from ubiquinol to cytochrome c, linking this redox reaction to translocation of protons across the mitochondrial inner membrane, with protons being carried across the membrane as hydrogens on the quinol. In the process called Q cycle, 2 protons are consumed from the matrix, 4 protons are released into the intermembrane space and 2 electrons are passed to cytochrome c. This chain is Cytochrome b-c1 complex subunit 7, found in Dermatophagoides pteronyssinus (European house dust mite).